The following is a 264-amino-acid chain: Somatomedin-B and thrombospondin type-1 domain-containing protein (264 aa).

The signal sequence occupies residues 1–20 (MKTLWMVLCALARLWPGALA). The region spanning 24–75 (EAGRCCPGRDPACFARGWRLDRVYGTCFCDQACRLTGDCCFDYDRACPARPC) is the SMB domain. 7 cysteine pairs are disulfide-bonded: Cys-28–Cys-36, Cys-28–Cys-52, Cys-36–Cys-70, Cys-50–Cys-52, Cys-50–Cys-63, Cys-56–Cys-62, and Cys-63–Cys-70. The region spanning 74-125 (PCFVGEWSPWSGCAGQCQPTTRVRRRSVRQEPLNGGAPCPPLEERAGCLEYS) is the TSP type-1 domain. Asn-227 is a glycosylation site (N-linked (GlcNAc...) asparagine).

Belongs to the thrombospondin family.

Its subcellular location is the secreted. The protein localises to the extracellular space. It is found in the extracellular matrix. The chain is Somatomedin-B and thrombospondin type-1 domain-containing protein (Sbspon) from Mus musculus (Mouse).